The sequence spans 454 residues: Probable ECA polymerase (454 aa).

The next 11 helical transmembrane spans lie at 3–23 (LGQF…ILTL), 39–59 (FSML…MLVF), 61–81 (FGVA…ATAF), 119–139 (LALV…FLLF), 154–174 (GVAL…VYFL), 180–200 (AWFF…VIVG), 201–221 (GTRA…IVRG), 222–242 (WITL…MFWL), 340–360 (LVVM…GLII), 377–397 (YKAA…IVLA), and 409–429 (VFFC…YWLF).

Belongs to the WzyE family. As to quaternary structure, probably part of a complex composed of WzxE, WzyE and WzzE.

It localises to the cell inner membrane. It functions in the pathway bacterial outer membrane biogenesis; enterobacterial common antigen biosynthesis. Functionally, probably involved in the polymerization of enterobacterial common antigen (ECA) trisaccharide repeat units. This is Probable ECA polymerase from Yersinia pseudotuberculosis serotype O:1b (strain IP 31758).